A 393-amino-acid chain; its full sequence is Ninja-family protein 1 (393 aa).

Disordered stretches follow at residues 1–27 (MEGF…PGQL) and 155–200 (NDDW…KEMN). Basic and acidic residues predominate over residues 156-170 (DDWKKRKEAQSLKRL).

This sequence belongs to the Ninja family.

It is found in the nucleus. The polypeptide is Ninja-family protein 1 (Zea mays (Maize)).